Reading from the N-terminus, the 302-residue chain is MAGRVREVSHSSDQSGRLPAAFLRPGSSSFTDFVREYSPEILPATRTLPAAAALPGGGPGAGEPPHATTIVALVFADGVVMAGDRRATAGPMIAQRDIQKVFQTDEHSCAGIAGTAGLAVEMIRLFQVELEHFEKLEGTLMSFEGKANRLSTMIRANLGMAMQGLAVVPLFAGYDLDAGRGRIVGYDITGGRSEEHDHHTVGSGSLFARGSLKKLYRPGMSEAETVRVALEALWDAADDDSATGGPDLLRKIWPVVGVTTAEGYRRVPDAELEPVVEAVVAGRRGNPGGNPGISAVHGDGGN.

Basic and acidic residues predominate over residues 1-10 (MAGRVREVSH). Positions 1–21 (MAGRVREVSHSSDQSGRLPAA) are disordered. The propeptide at 1-67 (MAGRVREVSH…GPGAGEPPHA (67 aa)) is removed in mature form; by autocatalysis. Thr68 functions as the Nucleophile in the catalytic mechanism. The disordered stretch occupies residues 283–302 (RRGNPGGNPGISAVHGDGGN).

This sequence belongs to the peptidase T1B family. As to quaternary structure, the 20S proteasome core is composed of 14 alpha and 14 beta subunits that assemble into four stacked heptameric rings, resulting in a barrel-shaped structure. The two inner rings, each composed of seven catalytic beta subunits, are sandwiched by two outer rings, each composed of seven alpha subunits. The catalytic chamber with the active sites is on the inside of the barrel. Has a gated structure, the ends of the cylinder being occluded by the N-termini of the alpha-subunits. Is capped by the proteasome-associated ATPase, ARC.

It is found in the cytoplasm. It carries out the reaction Cleavage of peptide bonds with very broad specificity.. The protein operates within protein degradation; proteasomal Pup-dependent pathway. With respect to regulation, the formation of the proteasomal ATPase ARC-20S proteasome complex, likely via the docking of the C-termini of ARC into the intersubunit pockets in the alpha-rings, may trigger opening of the gate for substrate entry. Interconversion between the open-gate and close-gate conformations leads to a dynamic regulation of the 20S proteasome proteolysis activity. Functionally, component of the proteasome core, a large protease complex with broad specificity involved in protein degradation. This Kineococcus radiotolerans (strain ATCC BAA-149 / DSM 14245 / SRS30216) protein is Proteasome subunit beta.